The following is a 122-amino-acid chain: Small ribosomal subunit protein uS13 (122 aa).

Residues 95 to 122 form a disordered region; the sequence is GLPVRGQRTKTNARTRKGPKKTIAGKKK.

Belongs to the universal ribosomal protein uS13 family. Part of the 30S ribosomal subunit. Forms a loose heterodimer with protein S19. Forms two bridges to the 50S subunit in the 70S ribosome.

In terms of biological role, located at the top of the head of the 30S subunit, it contacts several helices of the 16S rRNA. In the 70S ribosome it contacts the 23S rRNA (bridge B1a) and protein L5 of the 50S subunit (bridge B1b), connecting the 2 subunits; these bridges are implicated in subunit movement. Contacts the tRNAs in the A and P-sites. The chain is Small ribosomal subunit protein uS13 from Corynebacterium aurimucosum (strain ATCC 700975 / DSM 44827 / CIP 107346 / CN-1) (Corynebacterium nigricans).